We begin with the raw amino-acid sequence, 386 residues long: Succinate--CoA ligase [ADP-forming] subunit beta (386 aa).

Residues 9 to 244 enclose the ATP-grasp domain; it reads KELLKQFGVP…LDEEDPAEIE (236 aa). Residues Lys-46, 53–55, Glu-99, Ala-102, and Glu-107 each bind ATP; that span reads GRG. 2 residues coordinate Mg(2+): Asn-199 and Asp-213. Residues Asn-264 and 321–323 contribute to the substrate site; that span reads GIM.

It belongs to the succinate/malate CoA ligase beta subunit family. Heterotetramer of two alpha and two beta subunits. Requires Mg(2+) as cofactor.

The enzyme catalyses succinate + ATP + CoA = succinyl-CoA + ADP + phosphate. The catalysed reaction is GTP + succinate + CoA = succinyl-CoA + GDP + phosphate. It functions in the pathway carbohydrate metabolism; tricarboxylic acid cycle; succinate from succinyl-CoA (ligase route): step 1/1. Succinyl-CoA synthetase functions in the citric acid cycle (TCA), coupling the hydrolysis of succinyl-CoA to the synthesis of either ATP or GTP and thus represents the only step of substrate-level phosphorylation in the TCA. The beta subunit provides nucleotide specificity of the enzyme and binds the substrate succinate, while the binding sites for coenzyme A and phosphate are found in the alpha subunit. This is Succinate--CoA ligase [ADP-forming] subunit beta from Bordetella petrii (strain ATCC BAA-461 / DSM 12804 / CCUG 43448).